A 249-amino-acid polypeptide reads, in one-letter code: Protein LicA homolog (249 aa).

Belongs to the peptidase S49 family.

The protein is Protein LicA homolog (licA) of Metamycoplasma hominis (strain ATCC 23114 / DSM 25592 / NBRC 14850 / NCTC 10111 / PG21) (Mycoplasma hominis).